Consider the following 192-residue polypeptide: Fumarylpyruvate hydrolase (192 aa).

A divalent metal cation-binding residues include Glu41, Glu43, and Asp72.

Belongs to the FAH family. Mg(2+) serves as cofactor. Requires Mn(2+) as cofactor.

It catalyses the reaction 3-fumarylpyruvate + H2O = fumarate + pyruvate + H(+). It functions in the pathway aromatic compound metabolism; naphthalene degradation. In terms of biological role, involved in the catabolism of gentisate (2,5-dihydroxybenzoate) a key intermediates in the aerobic pathways for the metabolism of a large number of aromatic compoun such as naphthalene. Catalyzes the hydrolytic cleavage of fumarylpyruvate to form fumarate and pyruvate. This Ralstonia sp protein is Fumarylpyruvate hydrolase.